Reading from the N-terminus, the 181-residue chain is Crossover junction endodeoxyribonuclease RuvC (181 aa).

Catalysis depends on residues Asp-7, Glu-67, and Asp-139. Residues Asp-7, Glu-67, and Asp-139 each contribute to the Mg(2+) site.

Belongs to the RuvC family. Homodimer which binds Holliday junction (HJ) DNA. The HJ becomes 2-fold symmetrical on binding to RuvC with unstacked arms; it has a different conformation from HJ DNA in complex with RuvA. In the full resolvosome a probable DNA-RuvA(4)-RuvB(12)-RuvC(2) complex forms which resolves the HJ. Mg(2+) is required as a cofactor.

It is found in the cytoplasm. It catalyses the reaction Endonucleolytic cleavage at a junction such as a reciprocal single-stranded crossover between two homologous DNA duplexes (Holliday junction).. Functionally, the RuvA-RuvB-RuvC complex processes Holliday junction (HJ) DNA during genetic recombination and DNA repair. Endonuclease that resolves HJ intermediates. Cleaves cruciform DNA by making single-stranded nicks across the HJ at symmetrical positions within the homologous arms, yielding a 5'-phosphate and a 3'-hydroxyl group; requires a central core of homology in the junction. The consensus cleavage sequence is 5'-(A/T)TT(C/G)-3'. Cleavage occurs on the 3'-side of the TT dinucleotide at the point of strand exchange. HJ branch migration catalyzed by RuvA-RuvB allows RuvC to scan DNA until it finds its consensus sequence, where it cleaves and resolves the cruciform DNA. In Cupriavidus metallidurans (strain ATCC 43123 / DSM 2839 / NBRC 102507 / CH34) (Ralstonia metallidurans), this protein is Crossover junction endodeoxyribonuclease RuvC.